We begin with the raw amino-acid sequence, 355 residues long: Phosphate acyltransferase (355 aa).

Belongs to the PlsX family. Homodimer. Probably interacts with PlsY.

The protein localises to the cytoplasm. The catalysed reaction is a fatty acyl-[ACP] + phosphate = an acyl phosphate + holo-[ACP]. It functions in the pathway lipid metabolism; phospholipid metabolism. Its function is as follows. Catalyzes the reversible formation of acyl-phosphate (acyl-PO(4)) from acyl-[acyl-carrier-protein] (acyl-ACP). This enzyme utilizes acyl-ACP as fatty acyl donor, but not acyl-CoA. The protein is Phosphate acyltransferase of Erythrobacter litoralis (strain HTCC2594).